The sequence spans 172 residues: Transcriptional repressor NrdR (172 aa).

A zinc finger spans residues 3–34 (CPFCGAPDTRVIDSRLAGEGDQVRRRRECLSC). In terms of domain architecture, ATP-cone spans 49–139 (PRVVKRDGSR…VYLSFADVQA (91 aa)).

The protein belongs to the NrdR family. Zn(2+) is required as a cofactor.

Negatively regulates transcription of bacterial ribonucleotide reductase nrd genes and operons by binding to NrdR-boxes. This chain is Transcriptional repressor NrdR, found in Thioalkalivibrio sulfidiphilus (strain HL-EbGR7).